Consider the following 604-residue polypeptide: Pescadillo homolog (604 aa).

The BRCT domain occupies 349-448 (PTSTLFSKFI…ELLPVNKYAP (100 aa)). 2 disordered regions span residues 452–562 (LPPH…MTNK) and 579–604 (TRTQ…LSKK). Coiled coils occupy residues 468-522 (EAEK…LEAA) and 573-604 (GIDK…LSKK). Positions 476-510 (ENAEEEEEDEVDEDDEDADEDEEDEEEEDEEEDED) are enriched in acidic residues. Over residues 593–604 (KTKAQLDKLSKK) the composition is skewed to basic and acidic residues.

It belongs to the pescadillo family. As to quaternary structure, component of the NOP7 complex, composed of ERB1, NOP7 and YTM1. The complex is held together by ERB1, which interacts with NOP7 via its N-terminal domain and with YTM1 via a high-affinity interaction between the seven-bladed beta-propeller domains of the 2 proteins. The NOP7 complex associates with the 66S pre-ribosome.

The protein resides in the nucleus. The protein localises to the nucleolus. Its subcellular location is the nucleoplasm. Component of the NOP7 complex, which is required for maturation of the 25S and 5.8S ribosomal RNAs and formation of the 60S ribosome. The protein is Pescadillo homolog of Scheffersomyces stipitis (strain ATCC 58785 / CBS 6054 / NBRC 10063 / NRRL Y-11545) (Yeast).